A 447-amino-acid polypeptide reads, in one-letter code: MGKEKVHINIVVIGHVDSGKSTTTVHVIYKLGGIDKRVIERFEKEADEMNKRSFKYAWLLDKLKAERERGITIDIALLKFETTKYYSTVMDAPGHRDFIKNMITGTSQADCAVLIIDSTTGGFEAGISKDGQTREHALLAFTLGVKQMICCCNKMDATTPKYSKGRYEEIVKEVSSYLKEVGYNPDKIPFVPISGFEGDNMIERSTNLDWYKGPTLLDALDNINEPKRPSDKPLRLPLQDVYKIGGIGTVPVGRVETGVVKPGMLVTFAPTGLTTEVKSVEMHHEALTEALPGDNVRFNVKNVAVKDLKHGLVASNSKDDPAKDAANFTSQVIIMNHPGQIGNGYAPVLDCHTSHIAVKFAELITKIDRRSGKEIEKEPKFLKNGDAGMVKMIPTKPMVVETFAEYPPLGRFAVRDMRQTVAVGVIKSVEKKDPTGAKVTKAAAKKK.

One can recognise a tr-type G domain in the interval 5–230; the sequence is KVHINIVVIG…DNINEPKRPS (226 aa). The segment at 14 to 21 is G1; the sequence is GHVDSGKS. A GTP-binding site is contributed by 14–21; the sequence is GHVDSGKS. Residue Lys55 is modified to N6,N6-dimethyllysine. The tract at residues 70-74 is G2; it reads GITID. Lys79 bears the N6,N6,N6-trimethyllysine mark. The segment at 91–94 is G3; sequence DAPG. GTP is bound by residues 91–95 and 153–156; these read DAPGH and NKMD. The G4 stretch occupies residues 153–156; the sequence is NKMD. An N6,N6,N6-trimethyllysine modification is found at Lys187. The tract at residues 194 to 196 is G5; the sequence is SGF. Lys261 carries the post-translational modification N6-methyllysine. Glu289 carries the 5-glutamyl glycerylphosphorylethanolamine modification. The residue at position 306 (Lys306) is an N6,N6,N6-trimethyllysine. Glu362 bears the 5-glutamyl glycerylphosphorylethanolamine mark. Residue Lys396 is modified to N6,N6,N6-trimethyllysine.

The protein belongs to the TRAFAC class translation factor GTPase superfamily. Classic translation factor GTPase family. EF-Tu/EF-1A subfamily.

Its subcellular location is the cytoplasm. Its function is as follows. This protein promotes the GTP-dependent binding of aminoacyl-tRNA to the A-site of ribosomes during protein biosynthesis. In Pisum sativum (Garden pea), this protein is Elongation factor 1-alpha.